Reading from the N-terminus, the 221-residue chain is Ribosomal RNA large subunit methyltransferase E (221 aa).

Residues G72, W74, D91, D107, and D131 each contribute to the S-adenosyl-L-methionine site. Catalysis depends on K171, which acts as the Proton acceptor.

The protein belongs to the class I-like SAM-binding methyltransferase superfamily. RNA methyltransferase RlmE family.

Its subcellular location is the cytoplasm. It carries out the reaction uridine(2552) in 23S rRNA + S-adenosyl-L-methionine = 2'-O-methyluridine(2552) in 23S rRNA + S-adenosyl-L-homocysteine + H(+). Functionally, specifically methylates the uridine in position 2552 of 23S rRNA at the 2'-O position of the ribose in the fully assembled 50S ribosomal subunit. In Zymomonas mobilis subsp. mobilis (strain ATCC 31821 / ZM4 / CP4), this protein is Ribosomal RNA large subunit methyltransferase E.